An 811-amino-acid chain; its full sequence is Zinc finger CCCH domain-containing protein 11A (811 aa).

C3H1-type zinc fingers lie at residues 2 to 30, 32 to 58, and 61 to 87; these read PNQG…HCEA, LGNE…HMEI, and KRSE…HHNR. The residue at position 109 (serine 109) is a Phosphoserine. Glycyl lysine isopeptide (Lys-Gly) (interchain with G-Cter in SUMO2) cross-links involve residues lysine 115 and lysine 125. Serine 133 is modified (phosphoserine). Disordered regions lie at residues 140–195, 224–258, 286–352, and 368–434; these read MKVE…GLRV, KKMK…KENV, GKRK…EKVN, and ERAS…TCIK. Residue lysine 141 forms a Glycyl lysine isopeptide (Lys-Gly) (interchain with G-Cter in SUMO2) linkage. A phosphoserine mark is found at serine 150 and serine 172. A compositionally biased stretch (acidic residues) spans 161-176; sequence ADDDEDDDDQFSEEGD. Serine 291 carries the post-translational modification Phosphoserine. Basic and acidic residues-rich tracts occupy residues 310 to 323 and 368 to 391; these read KKVE…DKTP and ERAS…KTDD. Threonine 322 is subject to Phosphothreonine. A coiled-coil region spans residues 363 to 424; that stretch reads EEILLERASQ…KHRQQEAERQ (62 aa). Residue serine 371 is modified to Phosphoserine. Over residues 392-403 the composition is skewed to polar residues; sequence STSGARSSSTIR. The segment covering 418–434 has biased composition (basic and acidic residues); that stretch reads QQEAERQKSKKDTTCIK. Lysine 479 is covalently cross-linked (Glycyl lysine isopeptide (Lys-Gly) (interchain with G-Cter in SUMO2)). A disordered region spans residues 483-550; it reads ALRVQQSSES…KEASGETTGV (68 aa). Positions 487-499 are enriched in low complexity; that stretch reads QQSSESSTSSPSQ. A Glycyl lysine isopeptide (Lys-Gly) (interchain with G-Cter in SUMO2) cross-link involves residue lysine 620. Residues 716-769 are disordered; the sequence is TVPEAENPRDSLVLPPTQSSSDSSPPEVSGPSSSQMSMKTRRLSSASTGKPQLS. A compositionally biased stretch (low complexity) spans 730-749; that stretch reads PPTQSSSDSSPPEVSGPSSS. Over residues 750–766 the composition is skewed to polar residues; that stretch reads QMSMKTRRLSSASTGKP.

In terms of assembly, interacts with TREX complex components THOC2, DDX39 and POLDIP3; the interactions are ATP-dependent. Interacts with PABPN1; this interaction retains ZC3H11A in nuclear speckles. Interacts with KPNA3.

It localises to the nucleus speckle. Its function is as follows. Through its association with TREX complex components, may participate in the export and post-transcriptional coordination of selected mRNA transcripts, including those required to maintain the metabolic processes in embryonic cells. Binds RNA. This chain is Zinc finger CCCH domain-containing protein 11A (ZC3H11A), found in Pongo abelii (Sumatran orangutan).